A 602-amino-acid polypeptide reads, in one-letter code: Elongation factor 4 (602 aa).

The region spanning 2 to 184 (DHIRNFSIIA…AVIARMPPPK (183 aa)) is the tr-type G domain. Residues 14 to 19 (DHGKST) and 131 to 134 (NKMD) contribute to the GTP site.

The protein belongs to the TRAFAC class translation factor GTPase superfamily. Classic translation factor GTPase family. LepA subfamily.

It localises to the cell inner membrane. It catalyses the reaction GTP + H2O = GDP + phosphate + H(+). Its function is as follows. Required for accurate and efficient protein synthesis under certain stress conditions. May act as a fidelity factor of the translation reaction, by catalyzing a one-codon backward translocation of tRNAs on improperly translocated ribosomes. Back-translocation proceeds from a post-translocation (POST) complex to a pre-translocation (PRE) complex, thus giving elongation factor G a second chance to translocate the tRNAs correctly. Binds to ribosomes in a GTP-dependent manner. The sequence is that of Elongation factor 4 from Leptothrix cholodnii (strain ATCC 51168 / LMG 8142 / SP-6) (Leptothrix discophora (strain SP-6)).